Consider the following 288-residue polypeptide: Nucleotide-binding protein NE1849 (288 aa).

Residue 8–15 (GLSGSGKS) coordinates ATP. 57–60 (DMRS) is a GTP binding site.

It belongs to the RapZ-like family.

In terms of biological role, displays ATPase and GTPase activities. This chain is Nucleotide-binding protein NE1849, found in Nitrosomonas europaea (strain ATCC 19718 / CIP 103999 / KCTC 2705 / NBRC 14298).